We begin with the raw amino-acid sequence, 432 residues long: MVKLSIVLTPQFLSHDQSQFTKELQQHVKSVTCPCEYLRKVINSLAVYRHRETDFGVGVRDHPGQHGKTPSPQKLDNLIIIIIGFLRRYTFNILFCTSCLCVSFLKTIFWSRNGHDGSMDVQQRAWRSNRSRQKGLRSICMHTKKRVSSFRGNKIGLKDVITLRRHVETKVRAKIRKRKVTTKINRHDKINGKRKTARKQKMFQRAQELRRRAEDYHKCKIPPSARKPLCNWVRMAAAEHRHSSGLPYWLYLTAETLKNRMGRQPPPPTQQHSITDNSLSLKTPPECLLTPLPPSVDDNIKECPLAPLPPSPLPPSVDDNLKECLFVPLPPSPLPPSVDDNLKECLFVPLPPSPLPPSVDDNLKTPPLATQEAEVEKPPKPKRWRVDEVEQSPKPKRQREAEAQQLPKPKRRRLSKLRTRHCTQAWAIRINP.

2 disordered regions span residues 260–280 (RMGRQPPPPTQQHSITDNSLS) and 353–420 (SPLP…LRTR). Polar residues predominate over residues 270–280 (QQHSITDNSLS). Positions 374–402 (EVEKPPKPKRWRVDEVEQSPKPKRQREAE) are enriched in basic and acidic residues. Basic residues predominate over residues 408–420 (KPKRRRLSKLRTR).

The protein belongs to the NPIP family.

The chain is Nuclear pore complex-interacting protein family member B9 (NPIPB9) from Homo sapiens (Human).